A 214-amino-acid polypeptide reads, in one-letter code: 3,4-dihydroxy-2-butanone 4-phosphate synthase (214 aa).

Residues 37–38, Asp-42, 150–154, and Glu-174 each bind D-ribulose 5-phosphate; these read RE and RRGHT. Glu-38 provides a ligand contact to Mg(2+). His-153 is a binding site for Mg(2+).

Belongs to the DHBP synthase family. As to quaternary structure, homodimer. Mg(2+) is required as a cofactor. Mn(2+) serves as cofactor.

The catalysed reaction is D-ribulose 5-phosphate = (2S)-2-hydroxy-3-oxobutyl phosphate + formate + H(+). The protein operates within cofactor biosynthesis; riboflavin biosynthesis; 2-hydroxy-3-oxobutyl phosphate from D-ribulose 5-phosphate: step 1/1. In terms of biological role, catalyzes the conversion of D-ribulose 5-phosphate to formate and 3,4-dihydroxy-2-butanone 4-phosphate. The sequence is that of 3,4-dihydroxy-2-butanone 4-phosphate synthase from Nitratidesulfovibrio vulgaris (strain ATCC 29579 / DSM 644 / CCUG 34227 / NCIMB 8303 / VKM B-1760 / Hildenborough) (Desulfovibrio vulgaris).